Here is a 185-residue protein sequence, read N- to C-terminus: Ribonuclease M5 1 (185 aa).

Residues 4-87 (KEVIVVEGKD…AFLTKHDAAP (84 aa)) enclose the Toprim domain. Positions 10, 56, and 58 each coordinate Mg(2+).

Belongs to the ribonuclease M5 family. Requires Mg(2+) as cofactor.

It is found in the cytoplasm. It carries out the reaction Endonucleolytic cleavage of RNA, removing 21 and 42 nucleotides, respectively, from the 5'- and 3'-termini of a 5S-rRNA precursor.. Functionally, required for correct processing of both the 5' and 3' ends of 5S rRNA precursor. Cleaves both sides of a double-stranded region yielding mature 5S rRNA in one step. The sequence is that of Ribonuclease M5 1 from Ligilactobacillus salivarius (strain UCC118) (Lactobacillus salivarius).